A 341-amino-acid polypeptide reads, in one-letter code: MKALSKLKAEEGIWMTDVPVPELGHNDLLIKIRKTAICGTDVHIYNWDEWSQKTIPVPMVVGHEYVGEVVGIGQEVKGFKIGDRVSGEGHITCGHCRNCRGGRTHLCRNTIGVGVNRPGCFAEYLVIPAFNAFKIPDNISDDLASIFDPFGNAVHTALSFDLVGEDVLVSGAGPIGIMAAAVAKHVGARNVVITDVNEYRLELARKMGVTRAVNVAKENLNDVMAELGMTEGFDVGLEMSGAPPAFRTMLDTMNHGGRIAMLGIPPSDMSIDWTKVIFKGLFIKGIYGREMFETWYKMAALIQSGLDLSPIITHRFSIDDFQKGFDAMRSGQSGKVILSWD.

Position 38 (Cys38) interacts with Zn(2+). Active-site charge relay system residues include Thr40 and His43. Residues His63, Glu64, Cys93, Cys96, Cys99, and Cys107 each contribute to the Zn(2+) site. NAD(+) is bound by residues Ile175, Asp195, Arg200, 262-264 (LGI), and 286-287 (IY).

This sequence belongs to the zinc-containing alcohol dehydrogenase family. In terms of assembly, homotetramer. Zn(2+) serves as cofactor.

The protein localises to the cytoplasm. The catalysed reaction is L-threonine + NAD(+) = (2S)-2-amino-3-oxobutanoate + NADH + H(+). It functions in the pathway amino-acid degradation; L-threonine degradation via oxydo-reductase pathway; glycine from L-threonine: step 1/2. Its function is as follows. Catalyzes the NAD(+)-dependent oxidation of L-threonine to 2-amino-3-ketobutyrate. The polypeptide is L-threonine 3-dehydrogenase (Escherichia coli O17:K52:H18 (strain UMN026 / ExPEC)).